Reading from the N-terminus, the 573-residue chain is PCNA-interacting partner (573 aa).

The disordered stretch occupies residues 492 to 532; the sequence is TGGQVKNKPCKNVANKRSKRKQVDIQSETTNAQENEPPQKK. A compositionally biased stretch (polar residues) spans 515 to 527; the sequence is DIQSETTNAQENE.

It belongs to the PARI family.

The protein resides in the cytoplasm. It is found in the nucleus. Its function is as follows. Required to suppress inappropriate homologous recombination, thereby playing a central role DNA repair and in the maintenance of genomic stability. This is PCNA-interacting partner (parpbp) from Xenopus tropicalis (Western clawed frog).